The chain runs to 180 residues: Dynactin subunit 6 (180 aa).

This sequence belongs to the dynactin subunits 5/6 family. Dynactin subunit 6 subfamily. In terms of assembly, subunit of dynactin, a multiprotein complex part of a tripartite complex with dynein and a adapter, such as BICDL1, BICD2 or HOOK3. The dynactin complex is built around ACTR1A/ACTB filament and consists of an actin-related filament composed of a shoulder domain, a pointed end and a barbed end.

It is found in the cytoplasm. The protein localises to the cytoskeleton. In terms of biological role, part of the dynactin complex that activates the molecular motor dynein for ultra-processive transport along microtubules. This chain is Dynactin subunit 6 (dnc-6), found in Caenorhabditis elegans.